The sequence spans 110 residues: MNHCFLILFTLIVFTVVWSLEENEEYPDEDEMIESFMDGYSYRGDDGTCILKGDHCHGTCDCCGWTTTCRKSKSAGGKICKSEGSSISAFNAIAKGVAAMKKAKCKHKSG.

The first 19 residues, 1–19, serve as a signal peptide directing secretion; sequence MNHCFLILFTLIVFTVVWS. Residues 20 to 43 constitute a propeptide that is removed on maturation; sequence LEENEEYPDEDEMIESFMDGYSYR. 4 disulfide bridges follow: Cys49–Cys63, Cys56–Cys69, Cys60–Cys105, and Cys62–Cys80.

The protein belongs to the neurotoxin 03 (Tx2) family. 02 subfamily. As to expression, expressed by the venom gland.

The protein localises to the secreted. Functionally, probable ion channel inhibitor. The polypeptide is U32-theraphotoxin-Cg1a (Chilobrachys guangxiensis (Chinese earth tiger tarantula)).